The chain runs to 606 residues: ATP-dependent rRNA helicase spb4 (606 aa).

Positions 1–29 (MSFQSINIDKWLKNAVAAQGFKKMTPVQA) match the Q motif motif. Residues 32–213 (IPLFLKNKDL…KIAGLRNSVR (182 aa)) form the Helicase ATP-binding domain. 45–52 (AVTGSGKT) serves as a coordination point for ATP. The DEAD box signature appears at 161 to 164 (DEAD). The Helicase C-terminal domain maps to 246–400 (CMIHLLCTIE…ALDLSRLKVL (155 aa)). A disordered region spans residues 521 to 574 (KQKEVKEKRNTRREKRKSKKEFLKAQKNEASNNLKQEIVSKAGAQETENDDLID). Residues 521–601 (KQKEVKEKRN…KSKKRKNQAS (81 aa)) adopt a coiled-coil conformation. Over residues 529–539 (RNTRREKRKSK) the composition is skewed to basic residues.

It belongs to the DEAD box helicase family. DDX55/SPB4 subfamily. In terms of assembly, component of pre-60S ribosomal complexes.

It is found in the nucleus. Its subcellular location is the nucleolus. It catalyses the reaction ATP + H2O = ADP + phosphate + H(+). Functionally, ATP-binding RNA helicase involved in the biogenesis of 60S ribosomal subunits. Binds 90S pre-ribosomal particles and dissociates from pre-60S ribosomal particles after processing of 27SB pre-rRNA. Required for the normal formation of 18S rRNA through the processing of pre-rRNAs at sites A0, A1 and A2, and the normal formation of 25S and 5.8S rRNAs through the processing of pre-rRNAs at sites C1 and C2. The protein is ATP-dependent rRNA helicase spb4 of Schizosaccharomyces pombe (strain 972 / ATCC 24843) (Fission yeast).